We begin with the raw amino-acid sequence, 264 residues long: uncharacterized protein (264 aa).

The N-terminal stretch at 1-16 (MKGKSALTLLLAGIFS) is a signal peptide. The N-palmitoyl cysteine moiety is linked to residue cysteine 17. The S-diacylglycerol cysteine moiety is linked to residue cysteine 17.

It localises to the cell inner membrane. This is an uncharacterized protein from Escherichia coli (strain K12).